The primary structure comprises 268 residues: Purine nucleoside phosphorylase (268 aa).

Phosphate contacts are provided by residues Ser-36, His-68, 88 to 90 (RIH), and Ala-120. Glu-189 lines the a purine D-ribonucleoside pocket. Ser-208 is a binding site for phosphate. Asn-231 serves as a coordination point for a purine D-ribonucleoside.

It belongs to the PNP/MTAP phosphorylase family. Homotrimer.

It carries out the reaction a purine 2'-deoxy-D-ribonucleoside + phosphate = a purine nucleobase + 2-deoxy-alpha-D-ribose 1-phosphate. Its pathway is purine metabolism; purine nucleoside salvage. In terms of biological role, the purine nucleoside phosphorylases catalyze the phosphorolytic breakdown of the N-glycosidic bond in the beta-(deoxy)ribonucleoside molecules, with the formation of the corresponding free purine bases and pentose-1-phosphate. Cleaves guanosine, inosine, 2'-deoxyguanosine and 2'-deoxyinosine. This chain is Purine nucleoside phosphorylase (punA), found in Mycobacterium bovis (strain ATCC BAA-935 / AF2122/97).